We begin with the raw amino-acid sequence, 156 residues long: Lipoprotein signal peptidase (156 aa).

The next 3 helical transmembrane spans lie at 5-25 (FKFI…DQWV), 64-84 (YLHL…KTLL), and 89-109 (IAFG…FIHG). Residues Asp113 and Asp130 contribute to the active site. The chain crosses the membrane as a helical span at residues 122 to 142 (NFAIFNVADVMINISVALILI).

It belongs to the peptidase A8 family.

The protein localises to the cell inner membrane. It catalyses the reaction Release of signal peptides from bacterial membrane prolipoproteins. Hydrolyzes -Xaa-Yaa-Zaa-|-(S,diacylglyceryl)Cys-, in which Xaa is hydrophobic (preferably Leu), and Yaa (Ala or Ser) and Zaa (Gly or Ala) have small, neutral side chains.. Its pathway is protein modification; lipoprotein biosynthesis (signal peptide cleavage). In terms of biological role, this protein specifically catalyzes the removal of signal peptides from prolipoproteins. The polypeptide is Lipoprotein signal peptidase (Campylobacter jejuni subsp. jejuni serotype O:23/36 (strain 81-176)).